A 165-amino-acid polypeptide reads, in one-letter code: Type VI lipase immunity protein Tli3 (165 aa).

The signal sequence occupies residues 1 to 21 (MKCKTLLIACLFGLGSAQALA).

Interacts with the Tle3 toxin.

The protein resides in the periplasm. In terms of biological role, immunity protein that neutralizes the toxicity of the P.aeruginosa antibacterial toxin Tle3 in the periplasm to protect the cell from fratricide intoxication. This Pseudomonas aeruginosa (strain ATCC 15692 / DSM 22644 / CIP 104116 / JCM 14847 / LMG 12228 / 1C / PRS 101 / PAO1) protein is Type VI lipase immunity protein Tli3.